The following is a 241-amino-acid chain: tRNA (guanine-N(1)-)-methyltransferase (241 aa).

S-adenosyl-L-methionine contacts are provided by residues glycine 112 and 131–136 (LGDFVL).

Belongs to the RNA methyltransferase TrmD family. As to quaternary structure, homodimer.

It localises to the cytoplasm. It catalyses the reaction guanosine(37) in tRNA + S-adenosyl-L-methionine = N(1)-methylguanosine(37) in tRNA + S-adenosyl-L-homocysteine + H(+). Its function is as follows. Specifically methylates guanosine-37 in various tRNAs. In Clostridium novyi (strain NT), this protein is tRNA (guanine-N(1)-)-methyltransferase.